Here is a 468-residue protein sequence, read N- to C-terminus: MTKTLPKDFIFGGATAAYQAEGATHTDGKGPVAWDKYLEDNYWYTAEPASDFYNRYPVDLKLSEEFGVNGIRISIAWSRIFPTGKGDVNPKGVEYYHNLFAECHKRHVEPFVTLHHFDTPEALHSDGDFLNRENIEHFVNYAEFCFKEFSEVNYWTTFNEIGPIGDGQYLVGKFPPGIQYDLAKVFQSHHNMMVSHARAVKLFKDGGYSGEIGVVHALPTKYPFDANNPDDVRAAELEDIIHNKFILDATYLGKYSDKTMEGVNHILEVNGGELDLREEDFVALDAAKDLNDFLGINYYMSDWMQAFDGETEIIHNGKGEKGSSKYQIKGVGRRKAPVDVPKTDWDWIIFPQGLYDQIMRVKADYPNYKKIYITENGLGYKDEFVDNTVYDDGRIDYVKKHLEVISDAISDGANVKGYFMWSLMDVFSWSNGYEKRYGLFYVDFETQERYPKKSAYWYKKVAETQVIE.

D-galactose 6-phosphate is bound by residues Gln19, His116, Asn159, Glu160, and Asn297. The active-site Proton donor is the Glu160. Glu375 serves as the catalytic Nucleophile. Positions 428, 429, 435, and 437 each coordinate D-galactose 6-phosphate.

This sequence belongs to the glycosyl hydrolase 1 family.

The catalysed reaction is a 6-phospho-beta-D-galactoside + H2O = D-galactose 6-phosphate + an alcohol. It participates in carbohydrate metabolism; lactose degradation; D-galactose 6-phosphate and beta-D-glucose from lactose 6-phosphate: step 1/1. The polypeptide is 6-phospho-beta-galactosidase (Streptococcus pyogenes serotype M18 (strain MGAS8232)).